Here is a 145-residue protein sequence, read N- to C-terminus: Secreted RxLR effector protein PSE1 (145 aa).

Residues 1–21 (MRLSSFIVVGAAVVNLLTSGS) form the signal peptide. Positions 53–73 (RLLRYHSNNNRGGDEDIAEER) match the RxLR-dEER motif.

It belongs to the RxLR effector family.

It is found in the secreted. The protein resides in the host cell. Functionally, secreted effector that impairs both plant effector-triggered immunity and pathogen-associated molecular patterns (PAMP)-triggered immunity (PTI). Suppresses plant cell death as a part of the plant defense responses. Facilitates plant infection by altering the auxin content at the roots penetration points of the of the pathogen. The polypeptide is Secreted RxLR effector protein PSE1 (Phytophthora nicotianae (Potato buckeye rot agent)).